The primary structure comprises 445 residues: Tubulin alpha-3 chain (445 aa).

Positions 11, 72, 141, 145, 146, 180, 207, and 229 each coordinate GTP. Residue Glu-72 coordinates Mg(2+). Glu-255 is an active-site residue.

It belongs to the tubulin family. In terms of assembly, dimer of alpha and beta chains. A typical microtubule is a hollow water-filled tube with an outer diameter of 25 nm and an inner diameter of 15 nM. Alpha-beta heterodimers associate head-to-tail to form protofilaments running lengthwise along the microtubule wall with the beta-tubulin subunit facing the microtubule plus end conferring a structural polarity. Microtubules usually have 13 protofilaments but different protofilament numbers can be found in some organisms and specialized cells. Interacts with NUM1. Mg(2+) serves as cofactor.

It localises to the cytoplasm. It is found in the cytoskeleton. The catalysed reaction is GTP + H2O = GDP + phosphate + H(+). Functionally, tubulin is the major constituent of microtubules, a cylinder consisting of laterally associated linear protofilaments composed of alpha- and beta-tubulin heterodimers. Microtubules grow by the addition of GTP-tubulin dimers to the microtubule end, where a stabilizing cap forms. Below the cap, tubulin dimers are in GDP-bound state, owing to GTPase activity of alpha-tubulin. The sequence is that of Tubulin alpha-3 chain (TUB3) from Saccharomyces cerevisiae (strain ATCC 204508 / S288c) (Baker's yeast).